Here is a 103-residue protein sequence, read N- to C-terminus: Protein FMC1 homolog (103 aa).

It belongs to the FMC1 family.

In Nematostella vectensis (Starlet sea anemone), this protein is Protein FMC1 homolog.